The chain runs to 302 residues: MNAPHKPVLLNEVLESFKDRKGTIVDATLGYGGHSEALLKSNPDIKIVGIDQDSEAIAFSKQRLASYGDRVQIIQGRFADVIEDILQTHDVQGVLADIGVSSLQLDKKDRGFSIHSENLDMRMDQNAELSAYHVVNTYDEEELKRIFKEYGEIRHSGKLAKAIIHNRPIQSATQLAEIAQKILPKNKRVHPATTLFQAIRIEVNKELDQLKGLLDALERHKPKGAKVAIITFHSLEDRIVKQHFKEWAKSCICPPEAMRCTCGANHALGNIVTKKPIVASIDELEENPRARSAKLRVFQFKE.

S-adenosyl-L-methionine-binding positions include 32-34 (GGH), aspartate 51, phenylalanine 78, aspartate 97, and glutamine 104.

This sequence belongs to the methyltransferase superfamily. RsmH family.

It is found in the cytoplasm. It carries out the reaction cytidine(1402) in 16S rRNA + S-adenosyl-L-methionine = N(4)-methylcytidine(1402) in 16S rRNA + S-adenosyl-L-homocysteine + H(+). Functionally, specifically methylates the N4 position of cytidine in position 1402 (C1402) of 16S rRNA. This chain is Ribosomal RNA small subunit methyltransferase H, found in Nitratiruptor sp. (strain SB155-2).